The primary structure comprises 191 residues: Recombination protein RecR (191 aa).

The C4-type zinc finger occupies Cys-51 to Cys-66. A Toprim domain is found at Gly-74–Pro-168.

It belongs to the RecR family.

Its function is as follows. May play a role in DNA repair. It seems to be involved in an RecBC-independent recombinational process of DNA repair. It may act with RecF and RecO. The polypeptide is Recombination protein RecR (Synechococcus sp. (strain CC9605)).